The chain runs to 545 residues: CTP synthase (545 aa).

Residues 1 to 266 form an amidoligase domain region; it reads MTTNYIFVTG…DDYICKRFSL (266 aa). S14 contacts CTP. S14 is a UTP binding site. ATP contacts are provided by residues 15–20 and D72; that span reads SLGKGI. D72 and E140 together coordinate Mg(2+). Residues 147–149, 187–192, and K223 contribute to the CTP site; these read DIE and KTKPTQ. UTP contacts are provided by residues 187–192 and K223; that span reads KTKPTQ. 239–241 lines the ATP pocket; the sequence is KDV. In terms of domain architecture, Glutamine amidotransferase type-1 spans 291-542; it reads TIGMVGKYIE…VKAASEHQKR (252 aa). Residue G352 participates in L-glutamine binding. C379 acts as the Nucleophile; for glutamine hydrolysis in catalysis. L-glutamine-binding positions include 380-383, E403, and R470; that span reads LGMQ. Active-site residues include H515 and E517.

It belongs to the CTP synthase family. As to quaternary structure, homotetramer.

It catalyses the reaction UTP + L-glutamine + ATP + H2O = CTP + L-glutamate + ADP + phosphate + 2 H(+). It carries out the reaction L-glutamine + H2O = L-glutamate + NH4(+). The enzyme catalyses UTP + NH4(+) + ATP = CTP + ADP + phosphate + 2 H(+). The protein operates within pyrimidine metabolism; CTP biosynthesis via de novo pathway; CTP from UDP: step 2/2. Allosterically activated by GTP, when glutamine is the substrate; GTP has no effect on the reaction when ammonia is the substrate. The allosteric effector GTP functions by stabilizing the protein conformation that binds the tetrahedral intermediate(s) formed during glutamine hydrolysis. Inhibited by the product CTP, via allosteric rather than competitive inhibition. Catalyzes the ATP-dependent amination of UTP to CTP with either L-glutamine or ammonia as the source of nitrogen. Regulates intracellular CTP levels through interactions with the four ribonucleotide triphosphates. This Salmonella schwarzengrund (strain CVM19633) protein is CTP synthase.